Here is a 105-residue protein sequence, read N- to C-terminus: Large ribosomal subunit protein bL21 (105 aa).

This sequence belongs to the bacterial ribosomal protein bL21 family. As to quaternary structure, part of the 50S ribosomal subunit. Contacts protein L20.

This protein binds to 23S rRNA in the presence of protein L20. The polypeptide is Large ribosomal subunit protein bL21 (Methylobacterium nodulans (strain LMG 21967 / CNCM I-2342 / ORS 2060)).